Consider the following 276-residue polypeptide: Rhomboid protease GlpG (276 aa).

The next 6 helical transmembrane spans lie at G94–I114, I142–G162, L169–Q189, F192–W212, L229–M249, and A250–L270. S201 acts as the Nucleophile in catalysis. H254 is an active-site residue.

Belongs to the peptidase S54 family.

It is found in the cell inner membrane. The enzyme catalyses Cleaves type-1 transmembrane domains using a catalytic dyad composed of serine and histidine that are contributed by different transmembrane domains.. Rhomboid-type serine protease that catalyzes intramembrane proteolysis. The polypeptide is Rhomboid protease GlpG (Salmonella choleraesuis (strain SC-B67)).